The following is a 342-amino-acid chain: viral G-protein coupled receptor (342 aa).

Topologically, residues 1–51 (MAAEDFLTIFLDDDESWNETLNMSGYDYSGNFSLEVSVCEMTTVVPYTWNV) are extracellular. N-linked (GlcNAc...) asparagine; by host glycans are attached at residues Asn-18, Asn-22, and Asn-31. The chain crosses the membrane as a helical span at residues 52–72 (GILSLIFLINVLGNGLVTYIF). Topologically, residues 73–92 (CKHRSRAGAIDILLLGICLN) are cytoplasmic. The helical transmembrane segment at 93-113 (SLCLSISLLAEVLMFLFPNII) threads the bilayer. Topologically, residues 114–121 (STGLCRLE) are extracellular. A helical membrane pass occupies residues 122–142 (IFFYYLYVYLDIFSVVCVSLV). Residues 143–159 (RYLLVAYSTRSWPKKQS) are Cytoplasmic-facing. A helical transmembrane segment spans residues 160–180 (LGWVLTSAALLIALVLSGDAC). At 181 to 217 (RHRSRVVDPVSKQAMCYENAGNMTADWRLHVRTVSVT) the chain is on the extracellular side. A helical transmembrane segment spans residues 218–238 (AGFLLPLALLILFYALTWCVV). Residues 239–251 (RRTKLQARRKVRG) are Cytoplasmic-facing. A helical transmembrane segment spans residues 252–272 (VIVAVVLLFFVFCFPYHVLNL). Topologically, residues 273-293 (LDTLLRRRWIRDSCYTRGLIN) are extracellular. A helical membrane pass occupies residues 294-314 (VGLAVTSLLQALYSAVVPLIY). Over 315–342 (SCLGSLFRQRMYGLFQSLRQSFMSGATT) the chain is Cytoplasmic.

This sequence belongs to the G-protein coupled receptor 1 family. In terms of assembly, interacts with protein K7; this interaction promotes vGPCR proteasomal degradation. Interacts with host CADM1; this interaction is essential for chronic NF-kappa-B activation.

The protein resides in the host cell membrane. Receptor that signals constitutively via several signaling pathways including PI3K/AKT as well as mitogen- and stress-activated/MAP kinases. Promotes host cell proliferation and survival, modulates cell migration, stimulates angiogenesis, and recruits inflammatory cells, both in expressing cells and in neighboring cells. Maintains chronic activation of NF-kappa-B via interaction with host CADM1. The polypeptide is viral G-protein coupled receptor (ORF74) (Human herpesvirus 8 type P (isolate GK18) (HHV-8)).